The chain runs to 478 residues: Protein nucleotidyltransferase YdiU (478 aa).

The ATP site is built by G84, G86, R87, K107, D119, G120, R170, and R177. D246 (proton acceptor) is an active-site residue. Residues N247 and D256 each coordinate Mg(2+). Residue D256 participates in ATP binding.

It belongs to the SELO family. Mg(2+) serves as cofactor. Requires Mn(2+) as cofactor.

It catalyses the reaction L-seryl-[protein] + ATP = 3-O-(5'-adenylyl)-L-seryl-[protein] + diphosphate. The catalysed reaction is L-threonyl-[protein] + ATP = 3-O-(5'-adenylyl)-L-threonyl-[protein] + diphosphate. The enzyme catalyses L-tyrosyl-[protein] + ATP = O-(5'-adenylyl)-L-tyrosyl-[protein] + diphosphate. It carries out the reaction L-histidyl-[protein] + UTP = N(tele)-(5'-uridylyl)-L-histidyl-[protein] + diphosphate. It catalyses the reaction L-seryl-[protein] + UTP = O-(5'-uridylyl)-L-seryl-[protein] + diphosphate. The catalysed reaction is L-tyrosyl-[protein] + UTP = O-(5'-uridylyl)-L-tyrosyl-[protein] + diphosphate. Nucleotidyltransferase involved in the post-translational modification of proteins. It can catalyze the addition of adenosine monophosphate (AMP) or uridine monophosphate (UMP) to a protein, resulting in modifications known as AMPylation and UMPylation. In Shigella boydii serotype 4 (strain Sb227), this protein is Protein nucleotidyltransferase YdiU.